The chain runs to 439 residues: Probable eukaryotic translation initiation factor 5-1 (439 aa).

Position 29-36 (29-36) interacts with GTP; it reads GRGNGIKT. The segment at 143 to 245 is disordered; that stretch reads LKNPPEQKKS…REAAEKRMKE (103 aa). Basic and acidic residues predominate over residues 147 to 186; the sequence is PEQKKSSKDKKSMRRAEKERLREGEAADEEMRKLKKEAAS. The span at 214 to 228 shows a compositional bias: acidic residues; sequence DENDQADSEEDDDDV. Thr-232 carries the post-translational modification Phosphothreonine. Positions 234-245 are enriched in basic and acidic residues; it reads TSREAAEKRMKE. In terms of domain architecture, W2 spans 283 to 439; the sequence is KIPENAHEKL…QNAESESEEE (157 aa). Residues Ser-434 and Ser-436 each carry the phosphoserine modification.

This sequence belongs to the eIF-2-beta/eIF-5 family.

Its function is as follows. Catalyzes the hydrolysis of GTP bound to the 40S ribosomal initiation complex (40S.mRNA.Met-tRNA[F].eIF-2.GTP) with the subsequent joining of a 60S ribosomal subunit resulting in the release of eIF-2 and the guanine nucleotide. The subsequent joining of a 60S ribosomal subunit results in the formation of a functional 80S initiation complex (80S.mRNA.Met-tRNA[F]). This is Probable eukaryotic translation initiation factor 5-1 from Arabidopsis thaliana (Mouse-ear cress).